A 204-amino-acid polypeptide reads, in one-letter code: Thymidylate kinase (204 aa).

11 to 18 (GLDKSGKT) contributes to the ATP binding site.

This sequence belongs to the thymidylate kinase family.

The enzyme catalyses dTMP + ATP = dTDP + ADP. Its pathway is pyrimidine metabolism; dTTP biosynthesis. This chain is Thymidylate kinase (TMK), found in Rabbitpox virus (strain Utrecht) (RPV).